The following is a 218-amino-acid chain: Octanoyltransferase (218 aa).

Residues 31–206 (EETPDEVWLV…ELVNLLGYEQ (176 aa)) form the BPL/LPL catalytic domain. Substrate contacts are provided by residues 70–77 (RGGQVTYH), 137–139 (SLG), and 150–152 (GLA). Cysteine 168 acts as the Acyl-thioester intermediate in catalysis.

This sequence belongs to the LipB family.

Its subcellular location is the cytoplasm. It carries out the reaction octanoyl-[ACP] + L-lysyl-[protein] = N(6)-octanoyl-L-lysyl-[protein] + holo-[ACP] + H(+). Its pathway is protein modification; protein lipoylation via endogenous pathway; protein N(6)-(lipoyl)lysine from octanoyl-[acyl-carrier-protein]: step 1/2. In terms of biological role, catalyzes the transfer of endogenously produced octanoic acid from octanoyl-acyl-carrier-protein onto the lipoyl domains of lipoate-dependent enzymes. Lipoyl-ACP can also act as a substrate although octanoyl-ACP is likely to be the physiological substrate. In Vibrio vulnificus (strain YJ016), this protein is Octanoyltransferase.